The chain runs to 315 residues: Ornithine carbamoyltransferase, anabolic (315 aa).

Carbamoyl phosphate contacts are provided by residues 57–60 (STRT), Q84, R108, and 135–138 (HPCQ). Residues N166, D230, and 234–235 (SM) contribute to the L-ornithine site. Carbamoyl phosphate is bound by residues 270–271 (CL) and R298.

Belongs to the aspartate/ornithine carbamoyltransferase superfamily. OTCase family. As to quaternary structure, homododecamer (tetramer of trimers).

Its subcellular location is the cytoplasm. It carries out the reaction carbamoyl phosphate + L-ornithine = L-citrulline + phosphate + H(+). It participates in amino-acid biosynthesis; L-arginine biosynthesis; L-arginine from L-ornithine and carbamoyl phosphate: step 1/3. Inhibited by the bisubstrate delta-N-phosphonoacetyl-L-ornithine (PALO). In terms of biological role, reversibly catalyzes the transfer of the carbamoyl group from carbamoyl phosphate (CP) to the N(epsilon) atom of ornithine (ORN) to produce L-citrulline, which is a substrate for argininosuccinate synthetase, the enzyme involved in the final step in arginine biosynthesis. The sequence is that of Ornithine carbamoyltransferase, anabolic from Pyrococcus furiosus (strain ATCC 43587 / DSM 3638 / JCM 8422 / Vc1).